We begin with the raw amino-acid sequence, 412 residues long: Putative F-box protein At3g22940 (412 aa).

One can recognise an F-box domain in the interval 1–38 (MPLEEILSRLPLKSTRAVRSTCKKWDSLFKNRSFISKA).

This Arabidopsis thaliana (Mouse-ear cress) protein is Putative F-box protein At3g22940.